The sequence spans 121 residues: Fluoride-specific ion channel FluC 2 (121 aa).

4 helical membrane-spanning segments follow: residues 3 to 23, 31 to 51, 64 to 84, and 92 to 112; these read YLFIFLGGAVGALLRYLLSFI, IGTFIANLCGAFLMGFLGTLA, GITTGFIGSLTTFSTFQFELV, and FILLIVYALTSYIFGILLCFL. Positions 71 and 74 each coordinate Na(+).

It belongs to the fluoride channel Fluc/FEX (TC 1.A.43) family.

The protein resides in the cell membrane. It carries out the reaction fluoride(in) = fluoride(out). Na(+) is not transported, but it plays an essential structural role and its presence is essential for fluoride channel function. Its function is as follows. Fluoride-specific ion channel. Important for reducing fluoride concentration in the cell, thus reducing its toxicity. The polypeptide is Fluoride-specific ion channel FluC 2 (Staphylococcus saprophyticus subsp. saprophyticus (strain ATCC 15305 / DSM 20229 / NCIMB 8711 / NCTC 7292 / S-41)).